The sequence spans 447 residues: MITIKKGLDLPIAGKPAQVIHSGNAVNQVAILGEEYVGMRPSMKVREGDVVKKGQVLFEDKKNPGVIFTAPASGTITAINRGEKRVLQSVVINVEGDEKITFAKYSTEQLNTLSSEQVKQNLIESGLWTALRTRPFSKVPSIESEASSLFVNAMDTNPLAADPSVVLKEYSQDFTNGLTVLSRLFPSKPLHLCKAGDSNIPTTDLENLQIHDFTGVHPAGLVGTHIHFIDPVGIQKTVWHINYQDVIAVGKLFTTGELYSERVISLAGPQVKEPRLVRTIIGVNLSQLTQNELSAGKNRVISGSVLCGQIAKDSHDYLGRYALQVSVIAEGNEKEFFGWIMPQANKYSVTRTVLGHFSKKLFNFTTSENGGERAMVPIGSYERVMPLDILPTLLLRDLIVGDTDGAQELGCLELDEEDLALCSFVCPGKYEYGSILRQVLDKIEKEG.

The protein belongs to the NqrA family. In terms of assembly, composed of six subunits; NqrA, NqrB, NqrC, NqrD, NqrE and NqrF.

It carries out the reaction a ubiquinone + n Na(+)(in) + NADH + H(+) = a ubiquinol + n Na(+)(out) + NAD(+). In terms of biological role, NQR complex catalyzes the reduction of ubiquinone-1 to ubiquinol by two successive reactions, coupled with the transport of Na(+) ions from the cytoplasm to the periplasm. NqrA to NqrE are probably involved in the second step, the conversion of ubisemiquinone to ubiquinol. This Haemophilus influenzae (strain PittEE) protein is Na(+)-translocating NADH-quinone reductase subunit A.